The chain runs to 588 residues: DELLA protein GAI (588 aa).

Basic and acidic residues predominate over residues 1–15 (MKRDRDRDREREKRA). The tract at residues 1–38 (MKRDRDRDREREKRAFSNGAVSSGKSKIWEEDEEEKPD) is disordered. The short motif at 42–46 (DELLA) is the DELLA motif element. The tract at residues 152 to 177 (GAVFNSDSNKRHRSTTSSFSTTSSSM) is disordered. Low complexity predominate over residues 166–177 (TTSSFSTTSSSM). In terms of domain architecture, GRAS spans 190-574 (VDSQETGVRL…RPLIATSAWK (385 aa)). The segment at 197-251 (VRLVHTLMACAEAVQQENLTLADQLVRHIGILAVSQSGAMRKVATYFAEALARRI) is leucine repeat I (LRI). A VHIID region spans residues 269–334 (QMHFYETCPY…GGPPAFRLTG (66 aa)). Positions 300–304 (VHVID) match the VHIID motif. The segment at 348 to 380 (QVGWKLAQLAETIGVEFEFRGFVANSLADLDAT) is leucine repeat II (LRII). A PFYRE region spans residues 392–495 (VAINSVFELH…EVYLGRQICN (104 aa)). An LXXLL motif motif is present at residues 400–404 (LHRLL). Residues 498–574 (ACEGSDRVER…RPLIATSAWK (77 aa)) are SAW.

The protein belongs to the GRAS family. DELLA subfamily. Phosphorylated. Post-translationally, ubiquitinated. Upon GA application it is ubiquitinated, leading to its subsequent degradation. In terms of tissue distribution, expressed in both vegetative and reproductive tissues.

It localises to the nucleus. In terms of biological role, probable transcriptional regulator that acts as a repressor of the gibberellin (GA) signaling pathway. Probably acts by participating in large multiprotein complexes that repress transcription of GA-inducible genes. Upon GA application, it is degraded by the proteasome, allowing the GA signaling pathway. Its degradation is not essential for germination. The sequence is that of DELLA protein GAI (GAI) from Solanum lycopersicum (Tomato).